The following is a 286-amino-acid chain: Protease HtpX homolog (286 aa).

2 consecutive transmembrane segments (helical) span residues 7 to 27 (TFMLMAAITALFIVIGGMIGG) and 29 to 49 (SGMMLALLFALGMNFFSYWFS). His-131 contributes to the Zn(2+) binding site. The active site involves Glu-132. Position 135 (His-135) interacts with Zn(2+). The next 2 membrane-spanning stretches (helical) occupy residues 146 to 166 (LSATMAGAISALANFAVFFGG) and 177 to 197 (IAGIAVAILAPLAASLIQMAI). Glu-202 contributes to the Zn(2+) binding site.

This sequence belongs to the peptidase M48B family. Requires Zn(2+) as cofactor.

It localises to the cell inner membrane. This Ralstonia nicotianae (strain ATCC BAA-1114 / GMI1000) (Ralstonia solanacearum) protein is Protease HtpX homolog.